The primary structure comprises 327 residues: Small ribosomal subunit protein uS2 (327 aa).

The tract at residues 258–327 (AGHTPVSETL…PGVADGAALE (70 aa)) is disordered.

Belongs to the universal ribosomal protein uS2 family.

The chain is Small ribosomal subunit protein uS2 from Anaplasma marginale (strain St. Maries).